The following is a 275-amino-acid chain: Autophagy protein 5 (275 aa).

N-acetylmethionine is present on Met-1. Residue Lys-130 forms a Glycyl lysine isopeptide (Lys-Gly) (interchain with G-Cter in ATG12) linkage.

It belongs to the ATG5 family. As to quaternary structure, forms a conjugate with ATG12. Part of the minor complex composed of 4 sets of ATG12-ATG5 and ATG16L1 (400 kDa); this complex interacts with ATG3 leading to disruption of ATG7 interaction and promotion of ATG8-like proteins lipidation. Forms an 800-kDa complex composed of ATG12-ATG5 and ATG16L2. The ATG12-ATG5 conjugate interacts with RAB33A; this interaction is bridged by ATG16L1 and promotes ATG12-ATG5-ATG16L1 complex recruitment to phagophores. Interacts with TECPR1; the interaction is direct and does not take place when ATG16L1 is associated with the ATG5-ATG12 conjugate. Interacts with DHX58/RIG-1, IFIH1/MDA5 and MAVS/IPS-1 in monomeric form as well as in ATG12-ATG5 conjugate form. The interaction with MAVS is further enhanced upon vesicular stomatitis virus (VSV) infection. Interacts with ATG3. Interacts with ATG7 and ATG10. Interacts with FADD. Interacts with Bassoon/BSN; this interaction is important for the regulation of presynaptic autophagy. Interacts with ATG16L2. In terms of processing, conjugated to ATG12; which is essential for autophagy, but is not required for association with isolation membrane. Acetylated by EP300.

It localises to the cytoplasm. It is found in the preautophagosomal structure membrane. Its function is as follows. Involved in autophagic vesicle formation. Conjugation with ATG12, through a ubiquitin-like conjugating system involving ATG7 as an E1-like activating enzyme and ATG10 as an E2-like conjugating enzyme, is essential for its function. The ATG12-ATG5 conjugate acts as an E3-like enzyme which is required for lipidation of ATG8 family proteins and their association to the vesicle membranes. Involved in mitochondrial quality control after oxidative damage, and in subsequent cellular longevity. Plays a critical role in multiple aspects of lymphocyte development and is essential for both B and T lymphocyte survival and proliferation. Required for optimal processing and presentation of antigens for MHC II. Involved in the maintenance of axon morphology and membrane structures, as well as in normal adipocyte differentiation. Promotes primary ciliogenesis through removal of OFD1 from centriolar satellites and degradation of IFT20 via the autophagic pathway. As part of the ATG8 conjugation system with ATG12 and ATG16L1, required for recruitment of LRRK2 to stressed lysosomes and induction of LRRK2 kinase activity in response to lysosomal stress. In terms of biological role, may play an important role in the apoptotic process, possibly within the modified cytoskeleton. Its expression is a relatively late event in the apoptotic process, occurring downstream of caspase activity. Plays a crucial role in IFN-gamma-induced autophagic cell death by interacting with FADD. The sequence is that of Autophagy protein 5 from Pongo abelii (Sumatran orangutan).